Here is a 162-residue protein sequence, read N- to C-terminus: Ubiquitin-fold modifier-conjugating enzyme 1 (162 aa).

Catalysis depends on Cys115, which acts as the Glycyl thioester intermediate.

Belongs to the ubiquitin-conjugating enzyme family. UFC1 subfamily. Interacts with uba-5. Expressed in the intestine.

Its function is as follows. E2-like enzyme which forms an intermediate with ufm-1. The intermediate is formed via a thioester linkage. The protein is Ubiquitin-fold modifier-conjugating enzyme 1 of Caenorhabditis elegans.